The sequence spans 393 residues: UPF0496 protein At2g18630 (393 aa).

The tract at residues 1–20 (MMGGKSSKSKKNVEFGSPST) is disordered. Positions 149–222 (VNQFEEENED…RLRNIKTWRR (74 aa)) form a coiled coil. Helical transmembrane passes span 226-246 (MVFVTAFVSVLIFSVVAAAVA) and 249-269 (PVVAAIAGALAVPVGSVGKWC). Positions 299–356 (KEMDNISILVRKVEVEIESLLKKAEFAITEEKEVRLAIDEIKKKLDVFTETIEELGEH) form a coiled coil.

It belongs to the UPF0496 family.

It is found in the membrane. This is UPF0496 protein At2g18630 from Arabidopsis thaliana (Mouse-ear cress).